A 472-amino-acid chain; its full sequence is ATP synthase subunit beta (472 aa).

155–162 provides a ligand contact to ATP; sequence GGAGVGKT.

This sequence belongs to the ATPase alpha/beta chains family. In terms of assembly, F-type ATPases have 2 components, CF(1) - the catalytic core - and CF(0) - the membrane proton channel. CF(1) has five subunits: alpha(3), beta(3), gamma(1), delta(1), epsilon(1). CF(0) has three main subunits: a(1), b(2) and c(9-12). The alpha and beta chains form an alternating ring which encloses part of the gamma chain. CF(1) is attached to CF(0) by a central stalk formed by the gamma and epsilon chains, while a peripheral stalk is formed by the delta and b chains.

It localises to the cell inner membrane. The catalysed reaction is ATP + H2O + 4 H(+)(in) = ADP + phosphate + 5 H(+)(out). Functionally, produces ATP from ADP in the presence of a proton gradient across the membrane. The catalytic sites are hosted primarily by the beta subunits. The polypeptide is ATP synthase subunit beta (Fervidobacterium nodosum (strain ATCC 35602 / DSM 5306 / Rt17-B1)).